A 687-amino-acid chain; its full sequence is Ataxin-1-like (687 aa).

A compositionally biased stretch (basic and acidic residues) spans 1–19; the sequence is MKPVHERSQECLPPKKRDL. Disordered stretches follow at residues 1 to 46, 185 to 223, and 261 to 294; these read MKPV…SEWS, ATPP…LDLA, and SALE…KGES. An interaction with NCOR2 and ATXN1 region spans residues 20–197; sequence PVTSEDMGRT…PPQAASPAQS (178 aa). Residues 20–197 form a self-association region; it reads PVTSEDMGRT…PPQAASPAQS (178 aa). Composition is skewed to polar residues over residues 28 to 43 and 198 to 219; these read RTTS…SDAS and FNKS…NTQP. The segment covering 272-283 has biased composition (basic and acidic residues); sequence RQRERNVRRESE. Position 282 is a phosphoserine (Ser-282). Thr-328 carries the post-translational modification Phosphothreonine. The tract at residues 356 to 379 is disordered; it reads DEPSPLNLSHHNLDHQGEGRGSAR. Phosphoserine is present on Ser-359. The 132-residue stretch at 455 to 586 folds into the AXH domain; sequence PPPVTSSHLP…SISLQSLNSN (132 aa). Residues 587-649 form a disordered region; that stretch reads SVSQASCAPP…PGAQACWPAP (63 aa).

This sequence belongs to the ATXN1 family. In terms of assembly, homodimer. Interacts (via AXH domain) with NCOR2. Interacts with ATXN1 and CIC. Directly interacts with RBPJ; this interaction is disrupted in the presence of Notch intracellular domain. Competes with ATXN1 for RBPJ-binding. Found in a complex with CIC and ATXN1. As to expression, expressed in the cortex and hypothalamus (at protein level). Expressed in neuronal cells. Highly expressed in Purkinje cells of cerebellum.

It localises to the nucleus. The protein localises to the cell projection. Its subcellular location is the dendrite. Its function is as follows. Chromatin-binding factor that repress Notch signaling in the absence of Notch intracellular domain by acting as a CBF1 corepressor. Binds to the HEY promoter and might assist, along with NCOR2, RBPJ-mediated repression. Can suppress the cytotoxicity of ATXN1 in spinocerebellar ataxia type 1 (SCA1). In concert with CIC and ATXN1, involved in brain development. This chain is Ataxin-1-like (Atxn1l), found in Mus musculus (Mouse).